Reading from the N-terminus, the 392-residue chain is Formate-dependent phosphoribosylglycinamide formyltransferase (392 aa).

N(1)-(5-phospho-beta-D-ribosyl)glycinamide-binding positions include 20–21 and Glu-80; that span reads EL. ATP contacts are provided by residues Arg-112, Lys-153, 158-163, 193-196, and Glu-201; these read SSGKGQ and EGFV. The ATP-grasp domain maps to 117–306; the sequence is RLAAETLGLP…EFALHVRAIL (190 aa). Mg(2+) is bound by residues Glu-265 and Glu-277. N(1)-(5-phospho-beta-D-ribosyl)glycinamide contacts are provided by residues Asp-284, Lys-355, and 362 to 363; that span reads RR.

The protein belongs to the PurK/PurT family. As to quaternary structure, homodimer.

It catalyses the reaction N(1)-(5-phospho-beta-D-ribosyl)glycinamide + formate + ATP = N(2)-formyl-N(1)-(5-phospho-beta-D-ribosyl)glycinamide + ADP + phosphate + H(+). It participates in purine metabolism; IMP biosynthesis via de novo pathway; N(2)-formyl-N(1)-(5-phospho-D-ribosyl)glycinamide from N(1)-(5-phospho-D-ribosyl)glycinamide (formate route): step 1/1. Functionally, involved in the de novo purine biosynthesis. Catalyzes the transfer of formate to 5-phospho-ribosyl-glycinamide (GAR), producing 5-phospho-ribosyl-N-formylglycinamide (FGAR). Formate is provided by PurU via hydrolysis of 10-formyl-tetrahydrofolate. This chain is Formate-dependent phosphoribosylglycinamide formyltransferase, found in Aeromonas hydrophila subsp. hydrophila (strain ATCC 7966 / DSM 30187 / BCRC 13018 / CCUG 14551 / JCM 1027 / KCTC 2358 / NCIMB 9240 / NCTC 8049).